Consider the following 396-residue polypeptide: Cytochrome b (396 aa).

Helical transmembrane passes span 37 to 57, 81 to 102, 117 to 137, and 182 to 202; these read FGSL…ILAM, WLMR…YAHI, WNVG…GYVL, and FFTF…IHIM. Positions 87 and 101 each coordinate heme b. 2 residues coordinate heme b: H186 and H200. A ubiquinone is bound at residue H205. Transmembrane regions (helical) follow at residues 230 to 250, 292 to 312, 324 to 344, and 351 to 371; these read FKDI…SLLP, LGGV…PFTH, LAQV…WLGG, and FILM…LIFP.

This sequence belongs to the cytochrome b family. The cytochrome bc1 complex contains 3 respiratory subunits (MT-CYB, CYC1 and UQCRFS1), 2 core proteins (UQCRC1 and UQCRC2) and probably 6 low-molecular weight proteins. Requires heme b as cofactor.

The protein localises to the mitochondrion inner membrane. In terms of biological role, component of the ubiquinol-cytochrome c reductase complex (complex III or cytochrome b-c1 complex) that is part of the mitochondrial respiratory chain. The b-c1 complex mediates electron transfer from ubiquinol to cytochrome c. Contributes to the generation of a proton gradient across the mitochondrial membrane that is then used for ATP synthesis. This Lampetra fluviatilis (European river lamprey) protein is Cytochrome b (mt-cyb).